The following is a 92-amino-acid chain: Small ribosomal subunit protein uS19 (92 aa).

This sequence belongs to the universal ribosomal protein uS19 family.

Its function is as follows. Protein S19 forms a complex with S13 that binds strongly to the 16S ribosomal RNA. The polypeptide is Small ribosomal subunit protein uS19 (Rhizobium johnstonii (strain DSM 114642 / LMG 32736 / 3841) (Rhizobium leguminosarum bv. viciae)).